The primary structure comprises 29 residues: Kappa-sparatoxin-Hv1e (29 aa).

Disulfide bonds link Cys-3–Cys-17, Cys-10–Cys-22, and Cys-16–Cys-26.

In terms of tissue distribution, expressed by the venom gland.

It localises to the secreted. In terms of biological role, inhibitor of voltage-gated potassium channels of the Kv4/KCND family. Blocks calcium channels (Cav). In Heteropoda venatoria (Brown huntsman spider), this protein is Kappa-sparatoxin-Hv1e.